The primary structure comprises 104 residues: Growth-regulated protein homolog alpha (104 aa).

The N-terminal stretch at 1-30 (MAPAATAAAPRLLRAAMLFLLLVAAGRRAA) is a signal peptide. 2 disulfides stabilise this stretch: cysteine 40–cysteine 66 and cysteine 42–cysteine 82.

It belongs to the intercrine alpha (chemokine CxC) family.

Its subcellular location is the secreted. This Bos taurus (Bovine) protein is Growth-regulated protein homolog alpha.